The primary structure comprises 897 residues: Alanine--tRNA ligase (897 aa).

The Zn(2+) site is built by His-581, His-585, Cys-684, and His-688.

It belongs to the class-II aminoacyl-tRNA synthetase family. Zn(2+) is required as a cofactor.

It is found in the cytoplasm. The enzyme catalyses tRNA(Ala) + L-alanine + ATP = L-alanyl-tRNA(Ala) + AMP + diphosphate. In terms of biological role, catalyzes the attachment of alanine to tRNA(Ala) in a two-step reaction: alanine is first activated by ATP to form Ala-AMP and then transferred to the acceptor end of tRNA(Ala). Also edits incorrectly charged Ser-tRNA(Ala) and Gly-tRNA(Ala) via its editing domain. The protein is Alanine--tRNA ligase of Mycobacterium sp. (strain KMS).